The chain runs to 227 residues: NADH-quinone oxidoreductase subunit C (227 aa).

The protein belongs to the complex I 30 kDa subunit family. NDH-1 is composed of 14 different subunits. Subunits NuoB, C, D, E, F, and G constitute the peripheral sector of the complex.

It localises to the cell inner membrane. It catalyses the reaction a quinone + NADH + 5 H(+)(in) = a quinol + NAD(+) + 4 H(+)(out). Its function is as follows. NDH-1 shuttles electrons from NADH, via FMN and iron-sulfur (Fe-S) centers, to quinones in the respiratory chain. The immediate electron acceptor for the enzyme in this species is believed to be ubiquinone. Couples the redox reaction to proton translocation (for every two electrons transferred, four hydrogen ions are translocated across the cytoplasmic membrane), and thus conserves the redox energy in a proton gradient. The chain is NADH-quinone oxidoreductase subunit C from Coxiella burnetii (strain Dugway 5J108-111).